A 557-amino-acid chain; its full sequence is Glucose-6-phosphate isomerase (557 aa).

The Proton donor role is filled by Glu-359. Active-site residues include His-390 and Lys-518.

Belongs to the GPI family.

The protein localises to the cytoplasm. The catalysed reaction is alpha-D-glucose 6-phosphate = beta-D-fructose 6-phosphate. The protein operates within carbohydrate biosynthesis; gluconeogenesis. Its pathway is carbohydrate degradation; glycolysis; D-glyceraldehyde 3-phosphate and glycerone phosphate from D-glucose: step 2/4. In terms of biological role, catalyzes the reversible isomerization of glucose-6-phosphate to fructose-6-phosphate. The sequence is that of Glucose-6-phosphate isomerase from Hahella chejuensis (strain KCTC 2396).